Reading from the N-terminus, the 107-residue chain is MSISLTEAAANRVRSFLANRGKGEGLRLGVRTSGCSGMAYVLEFADVINDEDTVFEDKGVKVIIDGKSMVYLDGTELDFVKEGLNEGFKFNNPNVANECGCGESFTV.

Positions 35, 99, and 101 each coordinate Fe cation.

Belongs to the HesB/IscA family. As to quaternary structure, homodimer; may form tetramers and higher multimers. Fe cation is required as a cofactor.

Is able to transfer iron-sulfur clusters to apo-ferredoxin. Multiple cycles of [2Fe2S] cluster formation and transfer are observed, suggesting that IscA acts catalytically. Recruits intracellular free iron so as to provide iron for the assembly of transient iron-sulfur cluster in IscU in the presence of IscS, L-cysteine and the thioredoxin reductase system TrxA/TrxB. The sequence is that of Iron-binding protein IscA from Proteus mirabilis (strain HI4320).